The following is a 465-amino-acid chain: Trigger factor (465 aa).

Positions Gly164–Pro245 constitute a PPIase FKBP-type domain. Positions Gly430 to Glu465 are disordered. Over residues Gly440 to Gly455 the composition is skewed to low complexity. Positions Asp456–Glu465 are enriched in basic and acidic residues.

It belongs to the FKBP-type PPIase family. Tig subfamily.

It is found in the cytoplasm. The enzyme catalyses [protein]-peptidylproline (omega=180) = [protein]-peptidylproline (omega=0). In terms of biological role, involved in protein export. Acts as a chaperone by maintaining the newly synthesized protein in an open conformation. Functions as a peptidyl-prolyl cis-trans isomerase. The chain is Trigger factor from Nocardia farcinica (strain IFM 10152).